A 179-amino-acid polypeptide reads, in one-letter code: MIKSDPDVEVYALGKHIRMSAHKARRVIDQIRGRPYEETLMILELMPYRACYPILKLVYSAAANASHNMGFNETALIISQAEVNEGTITKKLKPRARGRSFAIKRPTCHITIVLQDISKDKKYFIWLRKYGWIYKDKYTDVRERYLYMMDHMLYRNRMTWINREMIWPYRDSEVLWDKK.

It belongs to the universal ribosomal protein uL22 family. Part of the 50S ribosomal subunit.

It localises to the plastid. The protein resides in the chloroplast. In terms of biological role, this protein binds specifically to 23S rRNA. The globular domain of the protein is located near the polypeptide exit tunnel on the outside of the subunit, while an extended beta-hairpin is found that lines the wall of the exit tunnel in the center of the 70S ribosome. This Ranunculus macranthus (Large buttercup) protein is Large ribosomal subunit protein uL22c (rpl22).